The chain runs to 132 residues: Large ribosomal subunit protein uL14 (132 aa).

Belongs to the universal ribosomal protein uL14 family. As to quaternary structure, the L3/L14/L24e cluster may contact the 16S rRNA in 2 intersubunit bridges. Part of the 50S ribosomal subunit. Forms a cluster with proteins L3 and L24e.

Functionally, forms part of two intersubunit bridges in the 70S ribosome. Binds to 23S rRNA. This chain is Large ribosomal subunit protein uL14, found in Haloarcula marismortui (strain ATCC 43049 / DSM 3752 / JCM 8966 / VKM B-1809) (Halobacterium marismortui).